A 791-amino-acid chain; its full sequence is MAGTSAPGSKRRSEPPAPRPGPPPGTGHPPSKRARGFSAAAAPDPDDPFGAHGDFTADDLEELDTLASQALSQCPAAARDVSSDHKVHRLLDGMSKNPSGKNRETVPIKDNFELEVLQAQYKELKEKMKVMEEEVLIKNGEIKILRDSLHQTESVLEEQRRSHFLLEQEKTQALSDKEKEFSKKLQSLQSELQFKDAEMNELRTKLQTSERANKLAAPSVSHVSPRKNPSVVIKPEACSPQFGKTSFPTKESFSANMSLPHPCQTESGYKPLVGREDSKPHSLRGDSIKQEEAQKSFVDSWRQRSNTQGSILINLLLKQPLIPGSSLSLCHLLSSSSESPAGTPLQPPGFGSTLAGMSGLRTTGSYDGSFSLSALREAQNLAFTGLNLVARNECSRDGDPAEGGRRAFPLCQLPGAVHFLPLVQFFIGLHCQALQDLAAAKRSGAPGDSPTHSSCVSSGVETNPEDSVCILEGFSVTALSILQHLVCHSGAVVSLLLSGVGADSAAGEGNRSLVHRLSDGDMTSALRGVADDQGQHPLLKMLLHLLAFSSAATGHLQASVLTQCLKVLVKLAENTSCDFLPRFQCVFQVLPKCLSPETPLPSVLLAVELLSLLADHDQLAPQLCSHSEGCLLLLLYMYITSRPDRVALETQWLQLEQEVVWLLAKLGVQSPLPPVTGSNCQCNVEVVRALTVMLHRQWLTVRRAGGPPRTDQQRRTVRCLRDTVLLLHGLSQKDKLFMMHCVEVLHQFDQVMPGVSMLIRGLPDVTDCEEAALDDLCAAETDVEDPEVECG.

Residues M1–A57 are disordered. Pro residues predominate over residues P15–G27. The segment covering G36 to D54 has biased composition (low complexity). The stretch at I108–A217 forms a coiled coil. An interaction with CINP region spans residues Q118–L156. The EEXXXDL motif signature appears at E769–L776.

The protein belongs to the ATRIP family. Interacts with ATR. Heterodimer with ATR. The heterodimer binds the RPA complex and is then recruited to single-stranded DNA. Interacts with CEP164 (via N-terminus). Interacts with CINP. Phosphorylated by ATR. In terms of tissue distribution, ubiquitous.

It is found in the nucleus. Required for checkpoint signaling after DNA damage. Required for ATR expression, possibly by stabilizing the protein. The chain is ATR-interacting protein (ATRIP) from Homo sapiens (Human).